A 967-amino-acid polypeptide reads, in one-letter code: LRR receptor-like serine/threonine-protein kinase ERL2 (967 aa).

A signal peptide spans 1-27 (MRRIETMKGLFFCLGMVVFMLLGSVSP). Residues 28-585 (MNNEGKALMA…SLPKSQVFTR (558 aa)) lie on the Extracellular side of the membrane. 2 N-linked (GlcNAc...) asparagine glycosylation sites follow: N70 and N79. LRR repeat units follow at residues 74 to 97 (NVVS…GDLM), 98 to 120 (NLQS…IGNC), 122 to 145 (SLAY…SKLK), 146 to 166 (QLEF…ATLT), 170 to 192 (NLKT…LYWN), 194 to 216 (VLQY…MCQL), 218 to 240 (GLWY…IGNC), 242 to 261 (SFEI…PYNI), 265 to 287 (QVAT…IGLM), 289 to 311 (ALAV…LGNL), 313 to 335 (FTGK…LGNM), 337 to 359 (RLSY…LGKL), 361 to 382 (QLFE…NISS), 385 to 406 (ALNQ…EFRN), 409 to 431 (SLTY…LGHI), 433 to 456 (NLDT…GDLE), 457 to 479 (HLLI…FGNL), 481 to 503 (SIQI…LGQL), 505 to 527 (NINS…LTNC), and 529 to 550 (SLAN…MKNF). 2 N-linked (GlcNAc...) asparagine glycosylation sites follow: N228 and N239. 2 N-linked (GlcNAc...) asparagine glycosylation sites follow: N310 and N334. A glycan (N-linked (GlcNAc...) asparagine) is linked at N379. N414, N443, N462, and N469 each carry an N-linked (GlcNAc...) asparagine glycan. 3 N-linked (GlcNAc...) asparagine glycosylation sites follow: N534, N539, and N549. The chain crosses the membrane as a helical span at residues 586 to 606 (VAVICMVLGFITLICMIFIAV). Residues 607–967 (YKSKQQKPVL…FREDISKSSL (361 aa)) are Cytoplasmic-facing. A phosphothreonine mark is found at T640 and T648. The Protein kinase domain occupies 651 to 921 (LDEKYIIGYG…EVSRVLLSLV (271 aa)). Residues 657 to 665 (IGYGASSTV) and K679 each bind ATP. Phosphotyrosine occurs at positions 724 and 763. Catalysis depends on D776, which acts as the Proton acceptor. Y818 is modified (phosphotyrosine). T826 carries the post-translational modification Phosphothreonine. Residues 921–955 (VPSPPPKKLPSPAKVQEGEERRESHSSDTTTPQWF) form a disordered region. A compositionally biased stretch (basic and acidic residues) spans 936 to 946 (QEGEERRESHS).

It belongs to the protein kinase superfamily. Ser/Thr protein kinase family. Mostly expressed in developing organs, including bud clusters, flowers, siliques and young rosettes. Also detected in mature aboveground organs, such as leaves, stems and pedicels, but barely in roots.

It localises to the membrane. The enzyme catalyses L-seryl-[protein] + ATP = O-phospho-L-seryl-[protein] + ADP + H(+). The catalysed reaction is L-threonyl-[protein] + ATP = O-phospho-L-threonyl-[protein] + ADP + H(+). Its function is as follows. Receptor kinase that regulates inflorescence architecture and organ shape as well as stomatal patterning, including density and clustering, together with ERL1 and ER. This chain is LRR receptor-like serine/threonine-protein kinase ERL2 (ERL2), found in Arabidopsis thaliana (Mouse-ear cress).